Consider the following 597-residue polypeptide: MFFSFYHSSFSSLSSFFFSFFSLLLYMLVLLQIFPKNYYEAGTLSIRVIRKNTFNHSYNNIKNIHYIHCGYPNIFNNCRNYYMNNFYNNNLSAPFKNKNNYMHIFFKIVEGNKKKKREHPFFKYLFHMNMLEKSGDKKNTVISKITESCQYGDIRKYMNMKKESLEEGEKNKSGEEYNKHVEQNNIKDEKIHFKDGTFIKSKEEEIENEKGGTICLKKEIQKNVLEINNNTYNNDTKYLSNPKGVTNKSKQSKKEIEKKKKKKNNNNNNNNNNKIKSEKSANDTKNIPPIPKNTEDRWNDYNKIKEYAKISNVYLGAHISASGGVQNAPINSFNISGLAFALFLKNQRKWESAALTNENIKQFEENCKKYNFDKNFILPHGSYLINLANPDKEKRDKSYLSFLDDIKRCEQLNIKLYNFHPGSTVGQCTVDEGIKNVADCINKVHKETNNVIIVLENSAGQKNSVGSKFEHLRDIINLVHDKDRIGVCLDTCHTFAAGYNIKTFENFDNVMKQFDDIVNVKYLKAVHLNDSKSDIGSGLDRHENIGKGKLTMDTFKYIMKSKYFKNIPIILETPDITNDESIYKYEIQNLYKLYFEK.

The span at 232-246 shows a compositional bias: polar residues; the sequence is YNNDTKYLSNPKGVT. Residues 232–296 are disordered; it reads YNNDTKYLSN…IPPIPKNTED (65 aa). Low complexity predominate over residues 265–274; that stretch reads NNNNNNNNNK. Zn(2+)-binding residues include His380, His420, Glu456, Asp490, His493, His527, Asp540, His542, and Glu572. His493 is a binding site for Mn(2+). Mn(2+) is bound by residues Asp540 and His542.

It belongs to the AP endonuclease 2 family. Zn(2+) serves as cofactor. It depends on Mn(2+) as a cofactor. In terms of processing, may be proteolytically cleaved into a 59 kDa form.

Its subcellular location is the mitochondrion. Its activity is regulated as follows. Apurinic/apyrimidinic (AP) endonuclease activity is enhanced with increasing concentrations of Mn(2+), while Zn(2+) initially enhances activity but subsequently inhibits activity in a concentration-dependent manner. Co(2+) inhibits apurinic/apyrimidinic (AP) endonuclease activity at concentrations greater than 2.5 mM. Its function is as follows. Plays a role in mitochondrial DNA base excision repair (BER) pathway induced by oxidative stress. Has apurinic/apyrimidinic (AP) endonuclease activity towards double-stranded DNA (dsDNA) with a preference for C as opposite base. Has 3'-phosphatase activity; removes 3'-phosphate from blunt-end, recessed, and gapped DNA templates and thus, removes 3'-blocks for DNA polymerase activity during BER. Lacks 3'-5' exonuclease activity and does not cleave damaged bases by nucleotide incision repair (NIR). The polypeptide is Apurinic-apyrimidinic endonuclease 1 (Plasmodium falciparum (isolate 3D7)).